A 329-amino-acid polypeptide reads, in one-letter code: Ribosomal protein L11 methyltransferase (329 aa).

Threonine 177, glycine 198, aspartate 220, and asparagine 264 together coordinate S-adenosyl-L-methionine.

This sequence belongs to the methyltransferase superfamily. PrmA family.

It is found in the cytoplasm. It carries out the reaction L-lysyl-[protein] + 3 S-adenosyl-L-methionine = N(6),N(6),N(6)-trimethyl-L-lysyl-[protein] + 3 S-adenosyl-L-homocysteine + 3 H(+). In terms of biological role, methylates ribosomal protein L11. The chain is Ribosomal protein L11 methyltransferase from Helicobacter pylori (strain Shi470).